A 1997-amino-acid polypeptide reads, in one-letter code: MSRWLFPWSSSIKTRACRYLLQHYLGHYLEERLSLEQLSLDLYNGSGRLTDIHLDIWSVNELLDSAGAPLEIIDGFIGSISVTIPWSALVTENCTLEVSKLQVTCRPKYRGAAQGTESQSWSSCMTTSMQLAQECLKEQPEEPSEPPQPIEGLEMFAQTIETVLRRIKVTFIDTIVRIENNPGDSNLGTALEIHIKRLDYCDEAVRDSPHTVPVDIHQPPAFIQKILQLSGVSLHYEEFKTSVQTPSPTPENPLESEPVQPSKTPSWPEEPQPAPSPIQQIGSCSGCTELTIKLKQNDLFPGPKLDIDGKIGSVHLFLTPRQISNLQEILDALSISESSAIREKLLKSRPLDLEDLKLIEQDLNQQLQSGPGSLFVPDPELVPFQTIENGDMFYSMAAMTNSMTSIRSANELSDIDLESSMYSDYSSQQIPSLTPGIMLSSPRKYGRTPFSATLPQNLHKLPGKSSHPPSMELLKPEMLLRLTLGGLTVTVPHISTYISPQEDPACPEVARHFFRELGYFKDSAFSGRDFSHLRGQFEKACHLSNIRVTAVAVQLVCEQRVGGGTHQSSVDLSCGRLEILECLRQGESTSRRTKNTEYTKLMTFCSPSTSSRPCAQIHYKRSQKTPTRSSRKKQEIKVSSEILVELEEFQTDIDLGLLDRLGSIFQNGACRESYSQNDLHMTDVPQSSEDMEIRVVASKSHICLQFPVPDLRPSLERRPWAEKAVRKDCLQMEVADLDIHSQSKTGTDEARKIEITFSDLHGVYTDGEKLNVPCIRVSKGADPLAKAGGKKFIFPSILVAILPQSKVSPWYLAQDKIDDIDHPSVESPCELKQPEPSPFSSKRTMFETEEMVIPADPNEMADFQHVTLASSQYTLEITLPRAHVFFPSKEVYESLYNRLCNDLLMWEPVPELGASISDSLLSAEPHTTSNYQQDTFRMCKSAFKLDSDSDDEDSHFYSVDEAARHRRGAQDGQSYFSASVTILKGRITAWTEAKGEGAKKLDDHHGEVVLDVENGCIFSVSKYRGKEDLSYLCIQSESVALYHKATVKDYLAPVSLEIPTFLHPTNLDPTIYLSEEGVSAQLSGARKDRNQKMLSLAVRIDLNLVKNVKEFLVALRLDGATLRHHMALPYQSWHSQILDFLDVVDEPILGYSPPAVITVLHTHLFSCAVDYRPLYLPIRVLITAETFTLSSNIVVDTSTFLLRFILDDSALYLSDKCDAEVTDLRKDYVCVLDVDLLELVITTWKGNASSKLTQPLFELRCSNNVLHIHTCADSCAMLVNLTQYVMNNGDLHCPPKPEPPTEIAGQKLQPPEGPSSLPPCLPAETAQINQGDLTDALIDTGRTGKEQPETAISVDAALLEESPVSVYLFPEEIKSGNKRQTTSPSPPPLTEGRVSQESLGLSDTSGDSELTDTDDFCILDAPGIGVPPKDGEPVVRKLVDSPIAVRDGHFSRPLGSTDLLKPPAKFPVPETRIVLREISVVWHLYGGKDFGSSRPNSARAQSPRSRTSFHNARGSPSRSSVTNRPQNTWRTQGGNGRIHDILMEIQLTKVSFQHESYPEPLADGEEKLHTGDLDELPLARQVFIVQELEIRDRLASSHINKFLYLYTSEKMPRRAHSNMLTIKALHVRPEAGLGGPECYLRMSLMPLRLNIDQDALFFLKDFFTSLASGIQTIVPMELGSEASRLDGPAKSSSDCELEQETSQGSTEDETMSPSSSTDQPIYFREFRFTSEVPIWLDYQGKHVTTEQVGTFAGILIGLAQLNCSELKLKRLYCRHGLLGADKVVSYALNEWLTDIRKNQLPGILGGVGPMHSVVQLFHGVRDLFWLPIEQYRKDGRIIRGLQRGAASFGTSTASAALELSNRLVQAIQATAETVYDILSPTPPVSRCALDVRQSRKLRRGQQPADLREGVAKAYDTVREGVIDTAHTICEVASRGHEQKGLTGAVGGVLRQIPPTVVKPFIVATEATSNLLGGMRNQIRPDAHKEDALKWRADEGQD.

The region spanning Cys-17–Gln-119 is the Chorein N-terminal domain. 5 disordered regions span residues Thr-241–Ile-281, His-1292–Ala-1323, Glu-1371–Asp-1414, Ser-1492–Gly-1534, and Arg-1684–Asp-1718. A compositionally biased stretch (pro residues) spans Pro-1311–Leu-1321. Composition is skewed to polar residues over residues Arg-1393–Ser-1408, Ser-1493–Gln-1532, and Lys-1690–Asp-1718.

The protein belongs to the ATG2 family.

Its subcellular location is the preautophagosomal structure membrane. The protein localises to the lipid droplet. The protein resides in the endoplasmic reticulum membrane. The catalysed reaction is a 1,2-diacyl-sn-glycero-3-phospho-L-serine(in) = a 1,2-diacyl-sn-glycero-3-phospho-L-serine(out). It catalyses the reaction a 1,2-diacyl-sn-glycero-3-phosphoethanolamine(in) = a 1,2-diacyl-sn-glycero-3-phosphoethanolamine(out). In terms of biological role, lipid transfer protein involved in autophagosome assembly. Tethers the edge of the isolation membrane (IM) to the endoplasmic reticulum (ER) and mediates direct lipid transfer from ER to IM for IM expansion. Binds to the ER exit site (ERES), which is the membrane source for autophagosome formation, and extracts phospholipids from the membrane source and transfers them to atg9 (atg9a or atg9b) to the IM for membrane expansion. Also regulates lipid droplets morphology and distribution within the cell. The sequence is that of Autophagy-related protein 2 homolog A from Xenopus tropicalis (Western clawed frog).